We begin with the raw amino-acid sequence, 392 residues long: Phosphopentomutase (392 aa).

Mn(2+)-binding residues include Asp-14, Asp-286, His-291, Asp-327, His-328, and His-339.

The protein belongs to the phosphopentomutase family. The cofactor is Mn(2+).

It is found in the cytoplasm. It carries out the reaction 2-deoxy-alpha-D-ribose 1-phosphate = 2-deoxy-D-ribose 5-phosphate. The catalysed reaction is alpha-D-ribose 1-phosphate = D-ribose 5-phosphate. The protein operates within carbohydrate degradation; 2-deoxy-D-ribose 1-phosphate degradation; D-glyceraldehyde 3-phosphate and acetaldehyde from 2-deoxy-alpha-D-ribose 1-phosphate: step 1/2. Functionally, isomerase that catalyzes the conversion of deoxy-ribose 1-phosphate (dRib-1-P) and ribose 1-phosphate (Rib-1-P) to deoxy-ribose 5-phosphate (dRib-5-P) and ribose 5-phosphate (Rib-5-P), respectively. The chain is Phosphopentomutase from Staphylococcus aureus (strain Mu3 / ATCC 700698).